The sequence spans 141 residues: Thioredoxin-like protein SkfH (141 aa).

Residues 2 to 141 (KDEQMLTEWP…DKMLKKIAGL (140 aa)) enclose the Thioredoxin domain. Cysteine 41 and cysteine 44 are joined by a disulfide.

Required for production of the bacteriocin SkfA. The sequence is that of Thioredoxin-like protein SkfH from Bacillus subtilis (strain 168).